The sequence spans 25 residues: Ranatuerin-1 (25 aa).

Cys-19 and Cys-25 are joined by a disulfide.

The protein belongs to the frog skin active peptide (FSAP) family. Ranatuerin subfamily. As to expression, expressed by the skin glands.

The protein resides in the secreted. Functionally, antibacterial activity against Gram-positive bacterium S.aureus (MIC=50 uM) and Gram-negative bacterium E.coli (MIC=2 uM). Has activity against C.albicans (MIC=70 uM). Shows no detectable hemolytic activity towards human erythrocytes. The sequence is that of Ranatuerin-1 from Aquarana catesbeiana (American bullfrog).